The sequence spans 102 residues: Monothiol glutaredoxin-S1 (102 aa).

The 101-residue stretch at 1-101 (MEKISNLLED…SLLRRAGAIW (101 aa)) folds into the Glutaredoxin domain. C21 serves as a coordination point for [2Fe-2S] cluster.

This sequence belongs to the glutaredoxin family. CC-type subfamily.

It localises to the cytoplasm. Its function is as follows. May only reduce GSH-thiol disulfides, but not protein disulfides. This chain is Monothiol glutaredoxin-S1 (GRXS1), found in Arabidopsis thaliana (Mouse-ear cress).